The following is a 370-amino-acid chain: NSFL1 cofactor p47 (370 aa).

The disordered stretch occupies residues serine 54–threonine 73. Phosphoserine occurs at positions 74, 102, 114, and 140. Disordered regions lie at residues histidine 80–asparagine 116 and threonine 138–leucine 157. Positions proline 109 to proline 115 match the Nuclear localization signal motif. Position 167 is a phosphotyrosine (tyrosine 167). The Nuclear localization signal signature appears at arginine 172–histidine 175. A phosphoserine mark is found at serine 176, serine 192, and serine 272. One can recognise an SEP domain in the interval aspartate 179 to valine 244. In terms of domain architecture, UBX spans glutamate 291 to arginine 368.

It belongs to the NSFL1C family. In terms of assembly, part of a ternary complex containing STX5A, NSFL1C and VCP. NSFL1C forms a homotrimer that binds to one end of a VCP homohexamer. The complex binds to membranes enriched in phosphatidylethanolamine-containing lipids and promotes Golgi membrane fusion. Interaction with VCIP135 leads to dissociation of the complex via ATP hydrolysis by VCP. Binds ubiquitin and mono-ubiquitinated proteins via its N-terminal UBA-like domain when bound to VCP. In terms of processing, phosphorylated during mitosis. Phosphorylation inhibits interaction with Golgi membranes and is required for the fragmentation of the Golgi stacks during mitosis.

The protein resides in the nucleus. It is found in the golgi apparatus. Its subcellular location is the golgi stack. The protein localises to the chromosome. It localises to the cytoplasm. The protein resides in the cytoskeleton. It is found in the microtubule organizing center. Its subcellular location is the centrosome. Functionally, reduces the ATPase activity of VCP. Necessary for the fragmentation of Golgi stacks during mitosis and for VCP-mediated reassembly of Golgi stacks after mitosis. May play a role in VCP-mediated formation of transitional endoplasmic reticulum (tER). Inhibits the activity of CTSL (in vitro). Together with UBXN2B/p37, regulates the centrosomal levels of kinase AURKA/Aurora A during mitotic progression by promoting AURKA removal from centrosomes in prophase. Also, regulates spindle orientation during mitosis. This is NSFL1 cofactor p47 (Nsfl1c) from Mus musculus (Mouse).